We begin with the raw amino-acid sequence, 366 residues long: ADP-ribosylarginine hydrolase Tri1 (366 aa).

The N-terminal extension stretch occupies residues 1 to 65; the sequence is MIDLREDTWT…LNTPPCLIPE (65 aa). Positions 74-366 are ADP-ribosyl hydrolase domain; the sequence is GALVGLAIGD…LFYMAPEEDF (293 aa). Mg(2+) is bound by residues Thr-116, Asp-117, Asp-118, Asp-161, and Asp-317.

It belongs to the ADP-ribosylglycohydrolase family. In terms of assembly, forms a stable complex with cognate effector protein Tre1-Sp. Mg(2+) serves as cofactor.

It carries out the reaction N(omega)-(ADP-D-ribosyl)-L-arginyl-[protein] + H2O = ADP-D-ribose + L-arginyl-[protein]. Functionally, immunity component of a contact-dependent interbacterial competition system (also called effector-immunity systems). Acts as an arginine mono-ADP-ribosylhydrolase, mediating the removal of mono-ADP-ribose attached to arginine residues on proteins. De-ADP-ribosylates FtsZ, is able to act on other proteins as well. Neutralizes the toxic activity of cognate toxin Tre1-Sp. Expression of this protein alone in E.coli partially protects the cells against competition by wild-type S.proteamaculans. Neutralizes Tre1-Sp both by occluding its active site via its N-terminal extension and by hydrolyzing the ADP-ribosyl moiety from FtsZ; the 2 activities are dissociable by mutagenesis. The protein is ADP-ribosylarginine hydrolase Tri1 of Serratia proteamaculans (strain 568).